The following is a 402-amino-acid chain: Galactoside 2-alpha-L-fucosyltransferase (402 aa).

Residues methionine 1–asparagine 6 lie on the Cytoplasmic side of the membrane. The helical; Signal-anchor for type II membrane protein transmembrane segment at tyrosine 7 to isoleucine 27 threads the bilayer. Residues threonine 28 to tyrosine 402 lie on the Lumenal side of the membrane. 3 N-linked (GlcNAc...) asparagine glycosylation sites follow: asparagine 119, asparagine 175, and asparagine 301.

The protein belongs to the glycosyltransferase 11 family. As to quaternary structure, may form oligomers. Post-translationally, N-glycosylated. In terms of tissue distribution, expression is restricted to pharyngeal neurons and gland cells.

It is found in the golgi apparatus. Its subcellular location is the golgi stack membrane. It functions in the pathway protein modification; protein glycosylation. Functionally, selectively catalyzes the addition of fucose in alpha 1-2 linkage to Gal-beta-(1-&gt;3)-GalNAc-alpha-R, Gal-beta-(1-&gt;3)-(GlcNAc-beta-(1-&gt;6))-GalNAc-alpha-R and Gal-beta-(1-&gt;3)-GalNAc acceptors but not Gal-beta-(1-&gt;3)-GlcNAc-beta-(1-&gt;3)-Gal-beta-(1-&gt;4)-Glc in vitro. This Caenorhabditis elegans protein is Galactoside 2-alpha-L-fucosyltransferase.